Consider the following 405-residue polypeptide: Tryptophan synthase beta chain (405 aa).

An N6-(pyridoxal phosphate)lysine modification is found at Lys-98.

The protein belongs to the TrpB family. In terms of assembly, tetramer of two alpha and two beta chains. Pyridoxal 5'-phosphate is required as a cofactor.

The enzyme catalyses (1S,2R)-1-C-(indol-3-yl)glycerol 3-phosphate + L-serine = D-glyceraldehyde 3-phosphate + L-tryptophan + H2O. Its pathway is amino-acid biosynthesis; L-tryptophan biosynthesis; L-tryptophan from chorismate: step 5/5. In terms of biological role, the beta subunit is responsible for the synthesis of L-tryptophan from indole and L-serine. This is Tryptophan synthase beta chain from Xanthomonas oryzae pv. oryzae (strain PXO99A).